The chain runs to 443 residues: 23S rRNA (uracil(1939)-C(5))-methyltransferase RlmD (443 aa).

Positions 8 to 66 (KPLPAEPIAAHIESFAHDGKGIAHVDGRVVFVDGALPGEDVTFVYTEIKRDYAAGRVVE) constitute a TRAM domain. [4Fe-4S] cluster-binding residues include C79, C85, C88, and C167. S-adenosyl-L-methionine is bound by residues Q276, F305, N310, E326, D353, and D374. C400 functions as the Nucleophile in the catalytic mechanism.

Belongs to the class I-like SAM-binding methyltransferase superfamily. RNA M5U methyltransferase family. RlmD subfamily.

The enzyme catalyses uridine(1939) in 23S rRNA + S-adenosyl-L-methionine = 5-methyluridine(1939) in 23S rRNA + S-adenosyl-L-homocysteine + H(+). In terms of biological role, catalyzes the formation of 5-methyl-uridine at position 1939 (m5U1939) in 23S rRNA. This is 23S rRNA (uracil(1939)-C(5))-methyltransferase RlmD from Methylococcus capsulatus (strain ATCC 33009 / NCIMB 11132 / Bath).